We begin with the raw amino-acid sequence, 100 residues long: Aspartyl/glutamyl-tRNA(Asn/Gln) amidotransferase subunit C (100 aa).

Belongs to the GatC family. In terms of assembly, heterotrimer of A, B and C subunits.

The catalysed reaction is L-glutamyl-tRNA(Gln) + L-glutamine + ATP + H2O = L-glutaminyl-tRNA(Gln) + L-glutamate + ADP + phosphate + H(+). It catalyses the reaction L-aspartyl-tRNA(Asn) + L-glutamine + ATP + H2O = L-asparaginyl-tRNA(Asn) + L-glutamate + ADP + phosphate + 2 H(+). Its function is as follows. Allows the formation of correctly charged Asn-tRNA(Asn) or Gln-tRNA(Gln) through the transamidation of misacylated Asp-tRNA(Asn) or Glu-tRNA(Gln) in organisms which lack either or both of asparaginyl-tRNA or glutaminyl-tRNA synthetases. The reaction takes place in the presence of glutamine and ATP through an activated phospho-Asp-tRNA(Asn) or phospho-Glu-tRNA(Gln). The sequence is that of Aspartyl/glutamyl-tRNA(Asn/Gln) amidotransferase subunit C from Rickettsia africae (strain ESF-5).